Reading from the N-terminus, the 1500-residue chain is Carbamoyl-phosphate synthase [ammonia], mitochondrial (1500 aa).

A mitochondrion-targeting transit peptide spans 1–38 (MTRILTACKVVKTLKSGFGFANVTTKRQWDFSRPGIRL). The segment at 39 to 218 (LSVKAKTAHI…VKVFGKGNPT (180 aa)) is anthranilate phosphoribosyltransferase homolog. N6-acetyllysine; alternate occurs at positions 44, 55, 57, and 119. N6-succinyllysine; alternate occurs at positions 44, 55, 57, and 119. The residue at position 55 (lysine 55) is an N6-glutaryllysine; alternate. Serine 148 carries the post-translational modification Phosphoserine. N6-acetyllysine; alternate is present on residues lysine 157 and lysine 171. Lysine 157 carries the post-translational modification N6-succinyllysine; alternate. Position 171 is an N6-glutaryllysine; alternate (lysine 171). Residue lysine 176 is modified to N6-glutaryllysine. Residue lysine 182 is modified to N6-acetyllysine. Serine 189 is modified (phosphoserine). At lysine 197 the chain carries N6-acetyllysine. N6-acetyllysine; alternate occurs at positions 207, 210, 214, 219, and 228. At lysine 207 the chain carries N6-succinyllysine; alternate. An N6-glutaryllysine; alternate mark is found at lysine 207, lysine 210, lysine 214, lysine 219, and lysine 228. Lysine 214 is subject to N6-succinyllysine; alternate. Residues 219 to 404 (KVVAVDCGIK…FSLIKKGKGT (186 aa)) form the Glutamine amidotransferase type-1 domain. An N6-glutaryllysine modification is found at lysine 237. Lysine 279 carries the N6-acetyllysine modification. Residues lysine 280, lysine 287, lysine 307, and lysine 310 each carry the N6-acetyllysine; alternate modification. Lysine 280 is subject to N6-glutaryllysine; alternate. N6-succinyllysine; alternate occurs at positions 287 and 307. N6-glutaryllysine; alternate occurs at positions 307 and 310. N6-succinyllysine is present on lysine 400. Residues lysine 402 and lysine 412 each carry the N6-succinyllysine; alternate modification. An N6-glutaryllysine; alternate mark is found at lysine 402, lysine 412, lysine 453, and lysine 458. 6 positions are modified to N6-acetyllysine; alternate: lysine 412, lysine 453, lysine 458, lysine 522, lysine 527, and lysine 532. 3 positions are modified to N6-succinyllysine; alternate: lysine 458, lysine 522, and lysine 527. N6-glutaryllysine; alternate occurs at positions 527 and 532. Residue serine 537 is modified to Phosphoserine; alternate. Residue serine 537 is glycosylated (O-linked (GlcNAc) serine; alternate). Serine 540 is subject to Phosphoserine. Residues 551–743 (SDKLNEINEK…LAFIAAKIAL (193 aa)) enclose the ATP-grasp 1 domain. Residues lysine 553 and lysine 560 each carry the N6-acetyllysine; alternate modification. Lysine 553 and lysine 560 each carry N6-succinyllysine; alternate. Residue lysine 553 is modified to N6-glutaryllysine; alternate. At serine 569 the chain carries Phosphoserine. N6-acetyllysine; alternate occurs at positions 575, 603, and 612. Residues lysine 575, lysine 603, and lysine 612 each carry the N6-succinyllysine; alternate modification. N6-acetyllysine is present on lysine 630. Residue lysine 728 is modified to N6-glutaryllysine. An N6-acetyllysine; alternate mark is found at lysine 751, lysine 757, lysine 772, lysine 793, lysine 811, lysine 831, lysine 840, lysine 841, lysine 856, lysine 875, lysine 889, and lysine 892. N6-succinyllysine; alternate is present on residues lysine 751 and lysine 757. N6-glutaryllysine; alternate is present on residues lysine 757, lysine 772, lysine 793, and lysine 811. Lysine 793 is subject to N6-succinyllysine; alternate. Lysine 831 and lysine 840 each carry N6-succinyllysine; alternate. An N6-glutaryllysine; alternate mark is found at lysine 841, lysine 856, lysine 875, lysine 889, and lysine 892. N6-succinyllysine; alternate is present on residues lysine 875, lysine 889, and lysine 892. Phosphoserine occurs at positions 896 and 898. An N6-acetyllysine; alternate mark is found at lysine 908, lysine 915, and lysine 919. Residues lysine 908, lysine 915, and lysine 919 each carry the N6-glutaryllysine; alternate modification. Lysine 915 and lysine 919 each carry N6-succinyllysine; alternate. An N6-acetyllysine modification is found at lysine 935. Serine 1036 is modified (phosphoserine). N6-acetyllysine; alternate is present on lysine 1074. The residue at position 1074 (lysine 1074) is an N6-succinyllysine; alternate. Lysine 1074 is subject to N6-glutaryllysine; alternate. 3 positions are modified to phosphoserine: serine 1079, serine 1090, and serine 1093. The ATP-grasp 2 domain maps to 1093 to 1284 (SAVLDELKVA…FIDVATKVMI (192 aa)). Lysine 1100 carries the N6-acetyllysine; alternate modification. Lysine 1100 is modified (N6-succinyllysine; alternate). Lysine 1149 is modified (N6-succinyllysine). N6-acetyllysine; alternate occurs at positions 1168 and 1183. An N6-succinyllysine; alternate mark is found at lysine 1168 and lysine 1183. Residues lysine 1168 and lysine 1183 each carry the N6-glutaryllysine; alternate modification. Serine 1203 is subject to Phosphoserine. Lysine 1222 is subject to N6-acetyllysine. Position 1224 is an N6-glutaryllysine (lysine 1224). Lysine 1232, lysine 1269, and lysine 1291 each carry N6-acetyllysine; alternate. Residues lysine 1232, lysine 1269, and lysine 1291 each carry the N6-succinyllysine; alternate modification. The O-linked (GlcNAc) serine glycan is linked to serine 1331. Threonine 1332 carries O-linked (GlcNAc) threonine glycosylation. Residues 1355 to 1500 (FKIPQKGILI…YRQYSAGKAA (146 aa)) enclose the MGS-like domain. Residue lysine 1356 is modified to N6-acetyllysine; alternate. Lysine 1356 and lysine 1360 each carry N6-succinyllysine; alternate. Residues lysine 1356 and lysine 1360 each carry the N6-glutaryllysine; alternate modification. The N-acetyl-L-glutamate site is built by threonine 1391, threonine 1394, and tryptophan 1410. Residues serine 1419 and serine 1431 each carry the phosphoserine modification. The N-acetyl-L-glutamate site is built by asparagine 1437 and asparagine 1440. Lysine 1444 bears the N6-acetyllysine; alternate mark. Lysine 1444 is modified (N6-succinyllysine; alternate). Asparagine 1449 lines the N-acetyl-L-glutamate pocket. N6-acetyllysine; alternate occurs at positions 1471, 1479, and 1486. N6-succinyllysine; alternate is present on residues lysine 1471, lysine 1479, and lysine 1486. Residues lysine 1479 and lysine 1486 each carry the N6-glutaryllysine; alternate modification.

In terms of assembly, can form homooligomers (monomers as predominant form and dimers). As to quaternary structure, (Microbial infection) Interacts with P.berghei (ANKA strain) phospholipid scramblase PLSCR; the interaction is involved in the interaction between parasite sporozoites and host hepatocytes. In terms of processing, undergoes proteolytic cleavage in the C-terminal region corresponding to the loss of approximately 12 AA residues from the C-terminus. Acetylation of Lys-287, Lys-603, Lys-841 and Lys-1291 is observed in liver mitochondria from fasted mice but not from fed mice. Post-translationally, succinylated at Lys-44, Lys-287 and Lys-1291. Desuccinylated at Lys-1291 by SIRT5, leading to activation. In terms of processing, glutarylated. Glutarylation levels increase during fasting. Deglutarylated by SIRT5 at Lys-55, Lys-219, Lys-412, Lys-889, Lys-892, Lys-915, Lys-1360 and Lys-1486, leading to activation. In terms of tissue distribution, expressed in hepatocytes (at protein level).

It localises to the mitochondrion. Its subcellular location is the nucleus. The protein resides in the nucleolus. The protein localises to the cell membrane. The enzyme catalyses hydrogencarbonate + NH4(+) + 2 ATP = carbamoyl phosphate + 2 ADP + phosphate + 2 H(+). Its activity is regulated as follows. Requires N-acetyl-L-glutamate (NAG) as an allosteric activator. Its function is as follows. Involved in the urea cycle of ureotelic animals where the enzyme plays an important role in removing excess ammonia from the cell. This is Carbamoyl-phosphate synthase [ammonia], mitochondrial (Cps1) from Mus musculus (Mouse).